The primary structure comprises 1093 residues: Error-prone DNA polymerase (1093 aa).

The segment at M1–S55 is disordered. Basic and acidic residues predominate over residues E12–G25.

The protein belongs to the DNA polymerase type-C family. DnaE2 subfamily.

The protein resides in the cytoplasm. The enzyme catalyses DNA(n) + a 2'-deoxyribonucleoside 5'-triphosphate = DNA(n+1) + diphosphate. Its function is as follows. DNA polymerase involved in damage-induced mutagenesis and translesion synthesis (TLS). It is not the major replicative DNA polymerase. This Mycolicibacterium paratuberculosis (strain ATCC BAA-968 / K-10) (Mycobacterium paratuberculosis) protein is Error-prone DNA polymerase.